A 328-amino-acid polypeptide reads, in one-letter code: Acyl-CoA wax alcohol acyltransferase 1 (328 aa).

Helical transmembrane passes span S12 to L32 and V34 to F53.

The protein belongs to the diacylglycerol acyltransferase family. In terms of tissue distribution, predominantly expressed in skin, where it is limited to the sebaceous gland. Expressed in more mature, centrally located cells just before their rupture and sebum release. Also expressed in all tissues except spleen. Expressed at higher level in thymus, prostate and testis.

Its subcellular location is the endoplasmic reticulum membrane. It catalyses the reaction a long chain fatty alcohol + a fatty acyl-CoA = a wax ester + CoA. The catalysed reaction is 1,2-di-(9Z-octadecenoyl)-sn-glycerol + (9Z)-octadecenoyl-CoA = 1,2,3-tri-(9Z-octadecenoyl)-glycerol + CoA. The enzyme catalyses hexadecan-1-ol + (9Z)-octadecenoyl-CoA = hexadecanyl (9Z)-octadecenoate + CoA. It carries out the reaction decan-1-ol + (9Z)-octadecenoyl-CoA = 1-O-decyl-(9Z)-octadecenoate + CoA. It catalyses the reaction (9Z)-hexadecen-1-ol + (9Z)-octadecenoyl-CoA = 1-O-(9Z)-hexadecenyl (9Z)-octadecenoate + CoA. The catalysed reaction is octadecan-1-ol + (9Z)-octadecenoyl-CoA = 1-O-octadecyl (9Z)-octadecenoate + CoA. The enzyme catalyses (9Z)-octadecen-1-ol + (9Z)-octadecenoyl-CoA = 1-O-(9Z)-octadecenyl (9Z)-octadecenoate + CoA. It carries out the reaction hexadecan-1-ol + hexadecanoyl-CoA = hexadecanyl hexadecanoate + CoA. It catalyses the reaction hexadecan-1-ol + (9Z)-hexadecenoyl-CoA = 1-O-hexadecyl (9Z)-hexadecenoate + CoA. The catalysed reaction is hexadecan-1-ol + octadecanoyl-CoA = hexadecanyl octadecanoate + CoA. The enzyme catalyses eicosan-1-ol + (9Z)-octadecenoyl-CoA = 1-O-eicosanyl (9Z)-octadecenoate + CoA. Functionally, acyltransferase that catalyzes the formation of ester bonds between fatty alcohols and fatty acyl-CoAs to form wax monoesters. Shows a strong preference for decyl alcohol (C10), with less activity towards C16 and C18 alcohols. Shows a strong preference for saturated acyl-CoAs. This Homo sapiens (Human) protein is Acyl-CoA wax alcohol acyltransferase 1 (AWAT1).